An 80-amino-acid chain; its full sequence is Protein FAM229B (80 aa).

The interval 1 to 44 (MPFRFGTQPRRFPVEGGDSSIGLEPGLSSSATCNGKEMSPTRQL) is disordered.

This sequence belongs to the FAM229 family.

The polypeptide is Protein FAM229B (FAM229B) (Bos taurus (Bovine)).